We begin with the raw amino-acid sequence, 458 residues long: Exodeoxyribonuclease 7 large subunit (458 aa).

It belongs to the XseA family. As to quaternary structure, heterooligomer composed of large and small subunits.

Its subcellular location is the cytoplasm. The catalysed reaction is Exonucleolytic cleavage in either 5'- to 3'- or 3'- to 5'-direction to yield nucleoside 5'-phosphates.. In terms of biological role, bidirectionally degrades single-stranded DNA into large acid-insoluble oligonucleotides, which are then degraded further into small acid-soluble oligonucleotides. This is Exodeoxyribonuclease 7 large subunit from Serratia proteamaculans (strain 568).